Reading from the N-terminus, the 615-residue chain is Leucine aminopeptidase 2 (615 aa).

Residues 139 to 141 (QCQ) and 271 to 276 (PYGGME) contribute to the a peptide site. Residue histidine 300 participates in Zn(2+) binding. Catalysis depends on glutamate 301, which acts as the Proton acceptor. Residues histidine 304 and glutamate 323 each coordinate Zn(2+). Catalysis depends on tyrosine 386, which acts as the Proton donor.

This sequence belongs to the peptidase M1 family. Requires Zn(2+) as cofactor.

It is found in the cytoplasm. The protein resides in the nucleus. It carries out the reaction an epoxide + H2O = an ethanediol. Its function is as follows. Aminopeptidase that preferentially cleaves di- and tripeptides. Also has low epoxide hydrolase activity (in vitro). Can hydrolyze the epoxide leukotriene LTA(4) but it forms preferentially 5,6-dihydroxy-7,9,11,14-eicosatetraenoic acid rather than the cytokine leukotriene B(4) as the product compared to the homologous mammalian enzyme (in vitro). This chain is Leucine aminopeptidase 2, found in Aspergillus oryzae (strain ATCC 42149 / RIB 40) (Yellow koji mold).